The chain runs to 170 residues: ATP synthase subunit b (170 aa).

Residues 15–37 (FNLFETNILNWAVVVFGLYKFLP) traverse the membrane as a helical segment.

Belongs to the ATPase B chain family. As to quaternary structure, F-type ATPases have 2 components, F(1) - the catalytic core - and F(0) - the membrane proton channel. F(1) has five subunits: alpha(3), beta(3), gamma(1), delta(1), epsilon(1). F(0) has four main subunits: a(1), b(1), b'(1) and c(10-14). The alpha and beta chains form an alternating ring which encloses part of the gamma chain. F(1) is attached to F(0) by a central stalk formed by the gamma and epsilon chains, while a peripheral stalk is formed by the delta, b and b' chains.

Its subcellular location is the cellular thylakoid membrane. F(1)F(0) ATP synthase produces ATP from ADP in the presence of a proton or sodium gradient. F-type ATPases consist of two structural domains, F(1) containing the extramembraneous catalytic core and F(0) containing the membrane proton channel, linked together by a central stalk and a peripheral stalk. During catalysis, ATP synthesis in the catalytic domain of F(1) is coupled via a rotary mechanism of the central stalk subunits to proton translocation. In terms of biological role, component of the F(0) channel, it forms part of the peripheral stalk, linking F(1) to F(0). The protein is ATP synthase subunit b of Prochlorococcus marinus (strain MIT 9312).